The primary structure comprises 1120 residues: Terminal uridylyltransferase 1 (1120 aa).

Disordered stretches follow at residues methionine 1–glutamate 156 and alanine 196–proline 221. The span at leucine 7–threonine 16 shows a compositional bias: polar residues. The segment covering asparagine 17–serine 59 has biased composition (low complexity). The span at proline 60–glycine 70 shows a compositional bias: basic residues. A compositionally biased stretch (basic and acidic residues) spans asparagine 90 to histidine 103. Polar residues predominate over residues leucine 118–serine 128. Composition is skewed to low complexity over residues alanine 134 to alanine 154 and serine 207 to serine 217. The segment at proline 222–leucine 253 adopts a C2H2-type; atypical zinc-finger fold. Zn(2+) contacts are provided by cysteine 227, cysteine 230, histidine 244, and histidine 249. UTP contacts are provided by residues serine 330 and serine 341–aspartate 344. Mg(2+) contacts are provided by aspartate 342 and aspartate 344. Residue arginine 390 coordinates RNA. Position 548 (aspartate 548) interacts with Mg(2+). UTP contacts are provided by residues glycine 555–serine 559, lysine 580, lysine 584, and serine 598–tyrosine 599. Residues glycine 659–valine 697 enclose the PAP-associated domain. The interval glycine 750 to arginine 1120 is important for catalytic activity and RNA binding. The Nucleotide recognition motif (NRM) motif lies at isoleucine 773–asparagine 782. Residues tyrosine 800–leucine 900 form an involved in oligomerization region. Positions proline 1047 to proline 1076 are disordered.

It belongs to the DNA polymerase type-B-like family. As to quaternary structure, homotetramer. Part of a 700kDa complex. Interacts with p45 and p50 RNA ligases. Mg(2+) serves as cofactor. Mn(2+) is required as a cofactor.

The protein resides in the mitochondrion. The enzyme catalyses RNA(n) + UTP = RNA(n)-3'-uridine ribonucleotide + diphosphate. With respect to regulation, zinc-binding is required for catalytic activity. Its function is as follows. Terminal uridylyltransferase which is involved in the post-transcriptional editing of mitochondrial RNA, a process involving the addition and deletion of uridine (U) nucleotides in the pre-mRNA. Specifically, catalyzes the addition of Us to the 3'-hydroxyl group of guided RNA (gRNA), with a preference for RNAs terminating in 6 Us, but also can add Us to RNAs terminating in 6 adenines (A), 6 cytosines (C), or 6 guanines (G). Can mediate RNA-independent UTP polymerization in vitro. Can mediate pyrophosphate-dependent degradation of synthetic RNA ending with U residues in vitro. The chain is Terminal uridylyltransferase 1 from Leishmania tarentolae (Sauroleishmania tarentolae).